The primary structure comprises 116 residues: Large ribosomal subunit protein bL19 (116 aa).

Belongs to the bacterial ribosomal protein bL19 family.

This protein is located at the 30S-50S ribosomal subunit interface and may play a role in the structure and function of the aminoacyl-tRNA binding site. This Pseudomonas savastanoi pv. phaseolicola (strain 1448A / Race 6) (Pseudomonas syringae pv. phaseolicola (strain 1448A / Race 6)) protein is Large ribosomal subunit protein bL19.